Reading from the N-terminus, the 334-residue chain is WD repeat domain 54 (334 aa).

3 WD repeats span residues 162 to 206 (GHQT…TLLT), 208 to 247 (IAGFGVPCPSVQLWQGIVAAGYGNGQVRLYDAGTGALHIQ), and 250 to 289 (AHARTISALDLAPEVGKLLSAAEDTFVHIWKLNRNPESGS).

In terms of assembly, homodimer and homotrimer; forms tight forms of dimers and trimers. Interacts with IZUMO1 and IZUMO1R/JUNO. Cross-linked to tightly form both dimers and trimers by TGM2. Cross-linking enhances the activation of EGF receptor-mediated signaling pathway. Cross-linking is inhibited by EGF. Post-translationally, ubiquitinated. EGF increases ubiquitination. Widely expressed in the ovary and testis (at protein level).

The protein resides in the vesicle. It is found in the cytoplasm. It localises to the cell membrane. Its function is as follows. Plays a role in the adhesion and fusion of the sperm-oocyte membrane through its interactions with IZUMO1 and IZUMO1R/JUNO. When cross-linked to form dimers and trimers, it has a regulatory effect on ERK signaling pathway activity in response to EGF stimulation. Colocalizes with the EGF receptor in WDR54-specific vesicle where it sustains the internalization and controls the degradation of the EGF receptor after EGF stimulation. The sequence is that of WD repeat domain 54 (Wdr54) from Rattus norvegicus (Rat).